A 50-amino-acid polypeptide reads, in one-letter code: Protein hunchback (50 aa).

C2H2-type zinc fingers lie at residues 1–5 (HLRNH), 11–33 (FKCGKCNYSCANKSMLNSHMKSH), and 39–50 (YRCANCCYATKY).

The protein belongs to the hunchback C2H2-type zinc-finger protein family.

The protein localises to the nucleus. Gap class segmentation protein that controls development of head structures. This chain is Protein hunchback (hb), found in Pholcus phalangioides (Longbodied cellar spider).